The primary structure comprises 404 residues: MSLVNPHGKEKVLKPLLLTGEELTAEKARAQSFAQVRLSSRETGDLIMLGIGGFTPLTGFMGHDDWKGSVQDCRMADGTFWPIPITLSTSKEKADELSIGQEVALVDDESGELMGSMVIEEKYSIDKAFECQEVFKTTDPEHPGVLMVMNQGDVNLAGRVKVFSEGTFPTEFAGIYMTPAETRKMFEANGWSTVAAFQTRNPMHRSHEYLVKIAIEVCDGVLIHQLLGKLKPGDIPADVRKECINALMEKYFVKGTCIQGGYPLDMRYAGPREALLHALFRQNFGCSHLIVGRDHAGVGDYYGPFDAHHIFDQIPADALETKPLKIDWTFYCYKCDGMASMKTCPHTAEDRLNLSGTKLRKMLSEGEQVPEHFSRPEVLEILQRYYASLTQKVDIKLHSHAVGK.

It belongs to the sulfate adenylyltransferase family.

The enzyme catalyses sulfate + ATP + H(+) = adenosine 5'-phosphosulfate + diphosphate. Its pathway is sulfur metabolism; hydrogen sulfide biosynthesis; sulfite from sulfate: step 1/3. This is Sulfate adenylyltransferase from Chlorobium chlorochromatii (strain CaD3).